Here is a 122-residue protein sequence, read N- to C-terminus: Beta-2-microglobulin (122 aa).

The signal sequence occupies residues 1 to 23 (MFLRSTFVAALVACLAYIHLGDA). The 90-residue stretch at 28-117 (PKVQIYSRNV…STLREATRFT (90 aa)) folds into the Ig-like C1-type domain. Cysteines 48 and 103 form a disulfide.

It belongs to the beta-2-microglobulin family. As to quaternary structure, heterodimer of an alpha chain and a beta chain. Beta-2-microglobulin is the beta-chain of major histocompatibility complex class I molecules.

The protein localises to the secreted. Component of the class I major histocompatibility complex (MHC). Involved in the presentation of peptide antigens to the immune system. This Acipenser baerii (Siberian sturgeon) protein is Beta-2-microglobulin (b2m).